The chain runs to 501 residues: Solute carrier family 2, facilitated glucose transporter member 5 (501 aa).

Residue M1 is modified to N-acetylmethionine. Residues 1-18 lie on the Cytoplasmic side of the membrane; sequence MEQQDPIKKEGRLTPVLA. Residues 19-39 form a helical membrane-spanning segment; that stretch reads LATLIAAFGSSFQYGYNVAAV. Y32 contacts D-fructose. Topologically, residues 40-68 are extracellular; sequence NSPAELMKAFYNETHYSRFSEYISEFSLT. A glycan (N-linked (GlcNAc...) asparagine) is linked at N51. A helical transmembrane segment spans residues 69-91; it reads LLWSISVSMFPFGGFVGSLMVGP. Over 92–98 the chain is Cytoplasmic; the sequence is LVNRLGR. Residues 99 to 119 form a helical membrane-spanning segment; the sequence is KGTLLFNNIFSIVPAILMGTS. Residues 120 to 126 are Extracellular-facing; it reads KTARSYE. The helical transmembrane segment at 127–149 threads the bilayer; it reads MIILSRLLVGICAGLSSNVVPMY. At 150-161 the chain is on the cytoplasmic side; it reads LGELSPKNLRGA. Residues 162 to 182 form a helical membrane-spanning segment; sequence LGVVPQLFITVGILVAQIVGL. D-fructose is bound at residue Q167. The Extracellular portion of the chain corresponds to 183–192; the sequence is RSLLATEEGW. A helical membrane pass occupies residues 193 to 213; that stretch reads PILLGLTAIPAALQLLLLPFF. The Cytoplasmic portion of the chain corresponds to 214–277; it reads PESPRYLLIQ…MFRMRSLRWQ (64 aa). A helical transmembrane segment spans residues 278–298; that stretch reads VISIIILMGGQQLSGVNAIYY. D-fructose-binding positions include Q288 and 296 to 298; that span reads IYY. The Extracellular segment spans residues 299–313; that stretch reads YADQIYLSAGVKDQD. A helical membrane pass occupies residues 314–334; the sequence is VQYVTVGTGAVNVLMTICAVF. The Cytoplasmic portion of the chain corresponds to 335-342; sequence VVEYLGRR. The helical transmembrane segment at 343–363 threads the bilayer; that stretch reads ALLLLGFSVCFIACCVLTVAL. Residues 364–371 lie on the Extracellular side of the membrane; that stretch reads ALQDRVSW. The chain crosses the membrane as a helical span at residues 372–394; sequence MPYISIVCVISYVIGHALGPSPI. H387 lines the D-fructose pocket. Topologically, residues 395-412 are cytoplasmic; sequence PALLITEVFLQSSRSAAY. A helical transmembrane segment spans residues 413 to 433; sequence MVGGTVHWLSNFAVGLVFPFI. A D-fructose-binding site is contributed by 419 to 420; it reads HW. At 434 to 439 the chain is on the extracellular side; it reads QVGLGA. The chain crosses the membrane as a helical span at residues 440-460; it reads YSFIIFAVICLLTTIYIFLIV. Topologically, residues 461–501 are cytoplasmic; the sequence is PETKGKTFVEINHIFTKMNKVSDVHPAKDELKDIPLSAVEL.

Belongs to the major facilitator superfamily. Sugar transporter (TC 2.A.1.1) family. Glucose transporter subfamily.

Its subcellular location is the apical cell membrane. The protein localises to the cell membrane. It localises to the sarcolemma. It catalyses the reaction D-fructose(out) = D-fructose(in). In terms of biological role, functions as a fructose transporter that has only low activity with other monosaccharides. Can mediate the uptake of deoxyglucose, but with low efficiency. Essential for fructose uptake in the small intestine. Plays a role in the regulation of salt uptake and blood pressure in response to dietary fructose. Required for the development of high blood pressure in response to high dietary fructose intake. This chain is Solute carrier family 2, facilitated glucose transporter member 5, found in Equus caballus (Horse).